The following is a 935-amino-acid chain: UvrABC system protein A (935 aa).

31 to 38 contributes to the ATP binding site; it reads GLSGSGKS. The segment at 254–281 adopts a C4-type zinc-finger fold; the sequence is CFKCKMSFEELEPLSFSFNSPKGACESC. 2 consecutive ABC transporter domains span residues 310-579 and 599-931; these read IFGY…NNHS and KEKH…KFLA. 631–638 contacts ATP; the sequence is GVSGSGKS. The C4-type zinc finger occupies 731-757; it reads CEKCQGDGDIKIEMHFLPDVLVQCDSC.

It belongs to the ABC transporter superfamily. UvrA family. In terms of assembly, forms a heterotetramer with UvrB during the search for lesions.

It localises to the cytoplasm. In terms of biological role, the UvrABC repair system catalyzes the recognition and processing of DNA lesions. UvrA is an ATPase and a DNA-binding protein. A damage recognition complex composed of 2 UvrA and 2 UvrB subunits scans DNA for abnormalities. When the presence of a lesion has been verified by UvrB, the UvrA molecules dissociate. The polypeptide is UvrABC system protein A (Helicobacter pylori (strain ATCC 700392 / 26695) (Campylobacter pylori)).